The primary structure comprises 357 residues: Histidinol-phosphate aminotransferase (357 aa).

Lys212 carries the post-translational modification N6-(pyridoxal phosphate)lysine.

Belongs to the class-II pyridoxal-phosphate-dependent aminotransferase family. Histidinol-phosphate aminotransferase subfamily. As to quaternary structure, homodimer. It depends on pyridoxal 5'-phosphate as a cofactor.

It catalyses the reaction L-histidinol phosphate + 2-oxoglutarate = 3-(imidazol-4-yl)-2-oxopropyl phosphate + L-glutamate. The protein operates within amino-acid biosynthesis; L-histidine biosynthesis; L-histidine from 5-phospho-alpha-D-ribose 1-diphosphate: step 7/9. The chain is Histidinol-phosphate aminotransferase from Pectobacterium carotovorum subsp. carotovorum (strain PC1).